Here is a 176-residue protein sequence, read N- to C-terminus: NADH-quinone oxidoreductase subunit I 2 (176 aa).

4Fe-4S ferredoxin-type domains lie at 45-77 and 87-116; these read IVLT…MEAA and RWFR…MTPD. 8 residues coordinate [4Fe-4S] cluster: Cys57, Cys60, Cys63, Cys67, Cys96, Cys99, Cys102, and Cys106.

It belongs to the complex I 23 kDa subunit family. As to quaternary structure, NDH-1 is composed of 14 different subunits. Subunits NuoA, H, J, K, L, M, N constitute the membrane sector of the complex. Requires [4Fe-4S] cluster as cofactor.

The protein resides in the cell inner membrane. The catalysed reaction is a quinone + NADH + 5 H(+)(in) = a quinol + NAD(+) + 4 H(+)(out). Its function is as follows. NDH-1 shuttles electrons from NADH, via FMN and iron-sulfur (Fe-S) centers, to quinones in the respiratory chain. The immediate electron acceptor for the enzyme in this species is believed to be ubiquinone. Couples the redox reaction to proton translocation (for every two electrons transferred, four hydrogen ions are translocated across the cytoplasmic membrane), and thus conserves the redox energy in a proton gradient. The sequence is that of NADH-quinone oxidoreductase subunit I 2 from Geobacter sulfurreducens (strain ATCC 51573 / DSM 12127 / PCA).